A 616-amino-acid polypeptide reads, in one-letter code: Zinc metalloproteinase nas-36 (616 aa).

The N-terminal stretch at 1–21 (MRRFCRLLFLNSLLSISICKA) is a signal peptide. Positions 22–125 (QNPAHLVADE…SKDKTKRLRR (104 aa)) are excised as a propeptide. Residues 126–321 (SFVSDKTATW…VATINTAYCK (196 aa)) enclose the Peptidase M12A domain. 9 disulfides stabilise this stretch: cysteine 168-cysteine 320, cysteine 191-cysteine 210, cysteine 324-cysteine 345, cysteine 347-cysteine 356, cysteine 367-cysteine 396, cysteine 424-cysteine 444, cysteine 518-cysteine 549, cysteine 522-cysteine 554, and cysteine 534-cysteine 539. N-linked (GlcNAc...) asparagine glycosylation occurs at asparagine 173. Histidine 218 is a Zn(2+) binding site. Glutamate 219 is a catalytic residue. Histidine 222 and histidine 228 together coordinate Zn(2+). Positions 316 to 357 (NTAYCKEECKSEKTECEYGGYMRPSKCSECLCPDGLGGEKCE) constitute an EGF-like domain. In terms of domain architecture, CUB spans 367-481 (CGGILELSDE…IGFKIQVRST (115 aa)). Positions 506–555 (PNVWADWGEWSMCSRTCGGCGIRSRVRSCRSKKCEGRRQEFGTCNLKACP) constitute a TSP type-1 domain.

The cofactor is Zn(2+).

It is found in the secreted. Functionally, mtalloprotease. Involved in molting, a process during larval stages in which a new cuticle is formed and the old cuticle is shed. This Caenorhabditis briggsae protein is Zinc metalloproteinase nas-36.